The sequence spans 317 residues: Protein IRX15-LIKE (317 aa).

Residues 27-47 traverse the membrane as a helical segment; sequence LWLLAFVSFFTIAFLLTLLYT.

As to expression, expressed in roots, rosette leaves, stems and siliques. Expressed in the xylem.

The protein localises to the golgi apparatus membrane. Required for xylan biosynthesis, but not directly involved in catalyzing the addition of sugars to the growing polymer. This chain is Protein IRX15-LIKE (IRX15-L), found in Arabidopsis thaliana (Mouse-ear cress).